Consider the following 632-residue polypeptide: Phosphomethylpyrimidine synthase (632 aa).

Over residues 1 to 13 (MNIRSNPDTTLPA) the composition is skewed to polar residues. The interval 1–26 (MNIRSNPDTTLPAVTTGPLPSSRKIF) is disordered. Substrate contacts are provided by residues asparagine 221, methionine 250, tyrosine 279, histidine 315, 335–337 (SRG), 376–379 (DGLR), and glutamate 415. A Zn(2+)-binding site is contributed by histidine 419. A substrate-binding site is contributed by tyrosine 442. Histidine 483 is a Zn(2+) binding site. [4Fe-4S] cluster-binding residues include cysteine 563, cysteine 566, and cysteine 571.

It belongs to the ThiC family. As to quaternary structure, homodimer. [4Fe-4S] cluster is required as a cofactor.

It carries out the reaction 5-amino-1-(5-phospho-beta-D-ribosyl)imidazole + S-adenosyl-L-methionine = 4-amino-2-methyl-5-(phosphooxymethyl)pyrimidine + CO + 5'-deoxyadenosine + formate + L-methionine + 3 H(+). Its pathway is cofactor biosynthesis; thiamine diphosphate biosynthesis. Functionally, catalyzes the synthesis of the hydroxymethylpyrimidine phosphate (HMP-P) moiety of thiamine from aminoimidazole ribotide (AIR) in a radical S-adenosyl-L-methionine (SAM)-dependent reaction. The chain is Phosphomethylpyrimidine synthase from Afipia carboxidovorans (strain ATCC 49405 / DSM 1227 / KCTC 32145 / OM5) (Oligotropha carboxidovorans).